The sequence spans 136 residues: Histone H3-like 3 (136 aa).

Basic residues predominate over residues 1–15; the sequence is MARTKQTARKSHGGK. Residues 1–42 form a disordered region; it reads MARTKQTARKSHGGKAPRTLLATKAARKSAPTTGGVKKPHRY. Lys-5 and Lys-10 each carry N6,N6,N6-trimethyllysine; alternate. 2 positions are modified to N6,N6-dimethyllysine; alternate: Lys-5 and Lys-10. N6-methyllysine; alternate is present on residues Lys-5 and Lys-10. Position 10 is an N6-acetyllysine; alternate (Lys-10). A Phosphoserine modification is found at Ser-11. At Lys-15 the chain carries N6-acetyllysine. An N6-methyllysine; alternate mark is found at Lys-24 and Lys-28. Position 24 is an N6-acetyllysine; alternate (Lys-24). Lys-28 is modified (N6,N6,N6-trimethyllysine; alternate). Lys-28 carries the post-translational modification N6,N6-dimethyllysine; alternate. A Phosphoserine modification is found at Ser-29. Lys-37 carries the post-translational modification N6,N6,N6-trimethyllysine; alternate. The residue at position 37 (Lys-37) is an N6,N6-dimethyllysine; alternate. Position 37 is an N6-methyllysine; alternate (Lys-37).

Belongs to the histone H3 family. In terms of assembly, the nucleosome is a histone octamer containing two molecules each of H2A, H2B, H3 and H4 assembled in one H3-H4 heterotetramer and two H2A-H2B heterodimers. The octamer wraps approximately 147 bp of DNA. Expressed in roots, seedlings, leaves and open flowers.

It is found in the nucleus. The protein localises to the chromosome. Its function is as follows. Core component of nucleosome. Nucleosomes wrap and compact DNA into chromatin, limiting DNA accessibility to the cellular machineries which require DNA as a template. Histones thereby play a central role in transcription regulation, DNA repair, DNA replication and chromosomal stability. DNA accessibility is regulated via a complex set of post-translational modifications of histones, also called histone code, and nucleosome remodeling. The sequence is that of Histone H3-like 3 from Arabidopsis thaliana (Mouse-ear cress).